Here is a 97-residue protein sequence, read N- to C-terminus: U-scoloptoxin(10)-Ssd2a (97 aa).

Positions 1–23 (MNKSMLIFFTILFLTYIIEEKEA) are cleaved as a signal peptide.

Contains 3 disulfide bonds. In terms of tissue distribution, expressed by the venom gland.

The protein localises to the secreted. The sequence is that of U-scoloptoxin(10)-Ssd2a from Scolopendra dehaani (Thai centipede).